Consider the following 172-residue polypeptide: UPF0316 protein Clos_0555 (172 aa).

A run of 3 helical transmembrane segments spans residues 3-23 (ALLG…MATI), 34-54 (VIAA…IGKV), and 61-81 (PLNV…GIFL).

It belongs to the UPF0316 family.

The protein localises to the cell membrane. This chain is UPF0316 protein Clos_0555, found in Alkaliphilus oremlandii (strain OhILAs) (Clostridium oremlandii (strain OhILAs)).